Reading from the N-terminus, the 606-residue chain is MESGNIVNAQPKLSGIIDGSKSYMYEQLWKLCAGPLCDIPKLGENVYYFPQGNIELVQASTREELNELQPICDLPSKLQCRVIAIHLKVENNSDEIYAEITLMPDTTQVVIPTQSENRFRPLVNSFTKVLTASDTSAYGGFSVPKKHAIECLPPLDMSQPLPAQEILAIDLHDNQWRFRHNYRGTPQRHSLTTGWNEFITSKKLVKGDVIVFVRGETGELRVGIRRARHQQGNIPSSIVSIDCMRHGVIASAKHAFDNQCIFIVVYKPRSSQFIVSYDKFLDAVNNKFNVGSRFTMRFEGDDFSERRYFGTIIGVSDFSPHWKCSEWRSLEVQWDEFASFSRPNKVSPWEIEHLVPALNVPRSSLLKNKRLREVNEFGSSSSHLLPPILTQGQEIGQLSVASPMNISLRYRDTTEAAMNPSRLLMSYPVQPMPKLNYNNQMVTQIEENITTKAGTNFRLFGVTLDTPPMIKDPIKQIGSDISKLTERKKFGQSQTLRSPIEIQSKQFSSSRTCTKVQMQGVTIGRAVDLSVLNGYDQLILELEKLFDIKGQLQTRNQWKIAFTDSDGYEMLVGDDPWPEFCKMVKKILIYSKEEVKNLKSSKSLSS.

Positions 126-228 form a DNA-binding region, TF-B3; that stretch reads FTKVLTASDT…ELRVGIRRAR (103 aa). The 82-residue stretch at 511–592 folds into the PB1 domain; the sequence is RTCTKVQMQG…MVKKILIYSK (82 aa).

Belongs to the ARF family. As to quaternary structure, homodimers and heterodimers.

It is found in the nucleus. Functionally, auxin response factors (ARFs) are transcriptional factors that bind specifically to the DNA sequence 5'-TGTCTC-3' found in the auxin-responsive promoter elements (AuxREs). Could act as transcriptional activator or repressor. Formation of heterodimers with Aux/IAA proteins may alter their ability to modulate early auxin response genes expression. This chain is Putative auxin response factor 21 (ARF21), found in Arabidopsis thaliana (Mouse-ear cress).